The following is a 268-amino-acid chain: MVKVGKLVEEQKAAMEEEKEVNAEAAEELEEAEEASCNGSKKKVVPGIVYLGHVPPRFRPLHVRNLLSVYGEVGRVFFQAEDPFVRRKKKAAAAAGGKKGAKYSKDYTEGWVEFRDKRIAKRVAASLHNTPMGARKRSPFRYDLWNLKYLHRFTWSHLSEHLAFERQVRRQRLRAEVAQAKRETDFYLRNVEQGQRFLAADGDATRPNSSWTFTQRPTEQELRAQKGARPGGRERARLATVQDQARSNRGLLARIFGASLLAESRKEP.

Residues 6 to 38 (KLVEEQKAAMEEEKEVNAEAAEELEEAEEASCN) are a coiled coil. The 98-residue stretch at 47 to 144 (GIVYLGHVPP…RKRSPFRYDL (98 aa)) folds into the RRM domain. A coiled-coil region spans residues 163–193 (AFERQVRRQRLRAEVAQAKRETDFYLRNVEQ). The tract at residues 200-242 (ADGDATRPNSSWTFTQRPTEQELRAQKGARPGGRERARLATVQ) is disordered. Residues 206 to 217 (RPNSSWTFTQRP) show a composition bias toward polar residues.

Belongs to the ESF2/ABP1 family. Interacts with IGHMBP2. Interacts with ESF1/ABTAP.

Its subcellular location is the nucleus. The protein localises to the nucleolus. May be a novel TATA-binding protein (TBP) which can function as a basal transcription activator. Can act as a regulator of basal transcription for class II genes. In Rattus norvegicus (Rat), this protein is Activator of basal transcription 1 (Abt1).